The primary structure comprises 227 residues: Uracil-DNA glycosylase (227 aa).

Residue Asp64 is the Proton acceptor of the active site.

The protein belongs to the uracil-DNA glycosylase (UDG) superfamily. UNG family.

The protein resides in the cytoplasm. It catalyses the reaction Hydrolyzes single-stranded DNA or mismatched double-stranded DNA and polynucleotides, releasing free uracil.. Functionally, excises uracil residues from the DNA which can arise as a result of misincorporation of dUMP residues by DNA polymerase or due to deamination of cytosine. The protein is Uracil-DNA glycosylase of Serratia proteamaculans (strain 568).